Reading from the N-terminus, the 201-residue chain is Small ribosomal subunit protein uS2 (201 aa).

The protein belongs to the universal ribosomal protein uS2 family.

The chain is Small ribosomal subunit protein uS2 from Nanoarchaeum equitans (strain Kin4-M).